A 160-amino-acid polypeptide reads, in one-letter code: Small ribosomal subunit protein uS9 (160 aa).

The protein belongs to the universal ribosomal protein uS9 family.

This is Small ribosomal subunit protein uS9 from Xanthobacter autotrophicus (strain ATCC BAA-1158 / Py2).